Here is a 62-residue protein sequence, read N- to C-terminus: Photosystem II reaction center protein Z (62 aa).

Transmembrane regions (helical) follow at residues 8 to 28 (AVFA…LVFA) and 41 to 61 (FSGT…NSLI).

It belongs to the PsbZ family. As to quaternary structure, PSII is composed of 1 copy each of membrane proteins PsbA, PsbB, PsbC, PsbD, PsbE, PsbF, PsbH, PsbI, PsbJ, PsbK, PsbL, PsbM, PsbT, PsbY, PsbZ, Psb30/Ycf12, at least 3 peripheral proteins of the oxygen-evolving complex and a large number of cofactors. It forms dimeric complexes.

It is found in the plastid. Its subcellular location is the chloroplast thylakoid membrane. Functionally, may control the interaction of photosystem II (PSII) cores with the light-harvesting antenna, regulates electron flow through the 2 photosystem reaction centers. PSII is a light-driven water plastoquinone oxidoreductase, using light energy to abstract electrons from H(2)O, generating a proton gradient subsequently used for ATP formation. The sequence is that of Photosystem II reaction center protein Z from Oryza nivara (Indian wild rice).